Consider the following 102-residue polypeptide: Small ribosomal subunit protein uS10 (102 aa).

It belongs to the universal ribosomal protein uS10 family. Part of the 30S ribosomal subunit.

Functionally, involved in the binding of tRNA to the ribosomes. The sequence is that of Small ribosomal subunit protein uS10 from Citrifermentans bemidjiense (strain ATCC BAA-1014 / DSM 16622 / JCM 12645 / Bem) (Geobacter bemidjiensis).